Reading from the N-terminus, the 55-residue chain is Bowman-Birk type proteinase inhibitor B1 (55 aa).

4 disulfide bridges follow: cysteine 6-cysteine 53, cysteine 12-cysteine 17, cysteine 26-cysteine 33, and cysteine 30-cysteine 45.

The protein belongs to the Bowman-Birk serine protease inhibitor family. Expressed in bulb (at protein level).

In terms of biological role, serine protease inhibitor. Weakly inhibits trypsin (Ki = 167 nM). Does not inhibit bacterial subtilisin or mamallian chymotrypsin. The protein is Bowman-Birk type proteinase inhibitor B1 of Hyacinthus orientalis (Common hyacinth).